We begin with the raw amino-acid sequence, 488 residues long: Glutamyl-tRNA(Gln) amidotransferase subunit A (488 aa).

Catalysis depends on charge relay system residues Lys-77 and Ser-152. Ser-176 acts as the Acyl-ester intermediate in catalysis.

This sequence belongs to the amidase family. GatA subfamily. In terms of assembly, heterotrimer of A, B and C subunits.

The enzyme catalyses L-glutamyl-tRNA(Gln) + L-glutamine + ATP + H2O = L-glutaminyl-tRNA(Gln) + L-glutamate + ADP + phosphate + H(+). In terms of biological role, allows the formation of correctly charged Gln-tRNA(Gln) through the transamidation of misacylated Glu-tRNA(Gln) in organisms which lack glutaminyl-tRNA synthetase. The reaction takes place in the presence of glutamine and ATP through an activated gamma-phospho-Glu-tRNA(Gln). The chain is Glutamyl-tRNA(Gln) amidotransferase subunit A from Streptococcus pneumoniae (strain 70585).